We begin with the raw amino-acid sequence, 394 residues long: MTNSNRIKLTWISFFSYALTGALVIVTGMVMGDIANYFQLPVSSMSNTFTFLNAGILISIFLNAWLMEIVPLKTQLRFGFVLMVAAVAGLMVSHSIALFSVSMFVLGLVSGITMSIGTFLITHMYEGRQRGARLLFTDSFFSMAGMIFPMVAAVLLARSIEWYWVYACIGLVYVAIFVLTFGCEFPVLGKKAEQSTQPVAKEKWGIGVLFLSVAALCYILGQLGFISWVPEYAKGLGMSLNDAGKLVSDFWMSYMFGMWAFSFILRFFDLQRILTVLAGLATVLMYLFINGAPEHMAWFILTLGFFSSAIYTSIITLGSLQTKVASPKLVNFVLTCGTIGTMLTFVVTGPIVAHSGPLAALQTANGLYAVVFVMCLILGFVTRHRQHNTVAASH.

Helical transmembrane passes span 11-31, 51-71, 78-98, 101-121, 134-154, 162-182, 206-226, 250-270, 273-293, 297-317, 332-352, and 361-381; these read WISF…GMVM, FLNA…EIVP, FGFV…SIAL, VSMF…TFLI, LLFT…VAAV, WYWV…LTFG, IGVL…LGFI, FWMS…FFDL, ILTV…NGAP, AWFI…IITL, FVLT…GPIV, and LQTA…LGFV.

The protein belongs to the major facilitator superfamily. TsgA family.

The protein localises to the cell inner membrane. The protein is Protein TsgA homolog of Enterobacter sp. (strain 638).